Consider the following 100-residue polypeptide: Large ribosomal subunit protein uL23 (100 aa).

The protein belongs to the universal ribosomal protein uL23 family. As to quaternary structure, part of the 50S ribosomal subunit. Contacts protein L29, and trigger factor when it is bound to the ribosome.

One of the early assembly proteins it binds 23S rRNA. One of the proteins that surrounds the polypeptide exit tunnel on the outside of the ribosome. Forms the main docking site for trigger factor binding to the ribosome. The chain is Large ribosomal subunit protein uL23 from Synechococcus elongatus (strain ATCC 33912 / PCC 7942 / FACHB-805) (Anacystis nidulans R2).